The sequence spans 502 residues: TGF-beta-activated kinase 1 and MAP3K7-binding protein 1 (502 aa).

The tract at residues 1 to 21 (MAAQRRSLLQSEQQPSWTDDL) is disordered. Phosphoserine is present on Ser7. Over residues 7 to 17 (SLLQSEQQPSW) the composition is skewed to polar residues. The PPM-type phosphatase domain occupies 28–365 (GVGSASNRSY…EDMTLLVRNF (338 aa)). Ser393 carries O-linked (GlcNAc) serine glycosylation. Positions 414 to 437 (QMVNGSHSASTLDEATPTLTNQSP) are enriched in polar residues. Residues 414–476 (QMVNGSHSAS…SLPPGEDGRV (63 aa)) form a disordered region. The residue at position 421 (Ser421) is a Phosphoserine. Thr429 carries the post-translational modification Phosphothreonine. Phosphoserine is present on Ser436. A compositionally biased stretch (low complexity) spans 438 to 455 (TLTLQSTNTHTQSSSSSS). Thr440 is modified (phosphothreonine).

As to quaternary structure, interacts with XIAP and BIRC7. Interacts with TRAF6 and MAP3K7; during IL-1 signaling. Identified in the TRIKA2 complex composed of MAP3K7, TAB1 and TAB2. Interacts with TRAF6 and MAPK14; these interactions allow MAPK14 autophosphorylation. Interacts with STING1; interaction takes place following cGAMP activation and promotes TAB1 recruitment to the endoplasmic reticulum, triggering MAP3K7/TAK1 activation and STING1 phosphorylation. Post-translationally, phosphorylated at all three sites Ser-421, Thr-429 and Ser-436 by MAPK14 when cells were exposed to cellular stresses, or stimulated with TNF-alpha, IL1 or LPS. These phosphorylations inhibit TAK1 activation by a feedback control mechanism. Dephosphorylated by DUSP14 at Ser-436, leading to TAB1-MAP3K7/TAK1 complex inactivation in T-cells. In terms of processing, ubiquitinated by MAP3K1 with 'Lys-63'-linked polyubiquitin; leading to activation of TAK1 and of JNK and p38 MAP kinases following EGF and TGF-beta stimulation. Ubiquitinated by ITCH with 'Lys-48'-linked polyubiquitin; leading to proteasomal degradation. Ubiquitinated by RNF114 during maternal-to-zygotic transition; leading to degradation. O-GlcNAcylated at Ser-393 is required for full MAP3K7/TAK1 activation upon stimulation with IL-1 or osmotic stress.

The protein resides in the cytoplasm. It is found in the cytosol. It localises to the endoplasmic reticulum membrane. Key adapter protein that plays an essential role in JNK and NF-kappa-B activation and proinflammatory cytokines production in response to stimulation with TLRs and cytokines. Mechanistically, associates with the catalytic domain of MAP3K7/TAK1 to trigger MAP3K7/TAK1 autophosphorylation leading to its full activation. Similarly, associates with MAPK14 and triggers its autophosphorylation and subsequent activation. In turn, MAPK14 phosphorylates TAB1 and inhibits MAP3K7/TAK1 activation in a feedback control mechanism. Also plays a role in recruiting MAPK14 to the TAK1 complex for the phosphorylation of the TAB2 and TAB3 regulatory subunits. The chain is TGF-beta-activated kinase 1 and MAP3K7-binding protein 1 (Tab1) from Mus musculus (Mouse).